The following is a 252-amino-acid chain: Triosephosphate isomerase (252 aa).

Position 10–12 (N10–K12) interacts with substrate. H96 acts as the Electrophile in catalysis. Catalysis depends on E168, which acts as the Proton acceptor. Residues G174, S214, and G235–G236 contribute to the substrate site.

The protein belongs to the triosephosphate isomerase family. As to quaternary structure, homodimer.

The protein localises to the cytoplasm. The catalysed reaction is D-glyceraldehyde 3-phosphate = dihydroxyacetone phosphate. It functions in the pathway carbohydrate biosynthesis; gluconeogenesis. Its pathway is carbohydrate degradation; glycolysis; D-glyceraldehyde 3-phosphate from glycerone phosphate: step 1/1. Involved in the gluconeogenesis. Catalyzes stereospecifically the conversion of dihydroxyacetone phosphate (DHAP) to D-glyceraldehyde-3-phosphate (G3P). The chain is Triosephosphate isomerase from Streptococcus pyogenes serotype M18 (strain MGAS8232).